A 746-amino-acid chain; its full sequence is Rhizobactin receptor (746 aa).

The first 26 residues, 1–26, serve as a signal peptide directing secretion; sequence MGNNENGGISFCVFVVVIGFGTGAVA. Residues 40 to 47 carry the TonB box motif; sequence EEIVVTGG. Residues 52-163 form the TBDR plug domain; that stretch reads QISEIARTIY…TGGIINIITK (112 aa). Positions 169 to 746 constitute a TBDR beta-barrel domain; that stretch reads EPGLHAEVTG…TFAVSLTKVF (578 aa). The TonB C-terminal box motif lies at 729 to 746; that stretch reads FDYKGRGRTFAVSLTKVF.

This sequence belongs to the TonB-dependent receptor family.

It is found in the cell outer membrane. Functionally, receptor for the siderophore rhizobactin. This chain is Rhizobactin receptor (rhtA), found in Rhizobium meliloti (strain 1021) (Ensifer meliloti).